Here is a 268-residue protein sequence, read N- to C-terminus: Small ribosomal subunit protein eS1 (268 aa).

It belongs to the eukaryotic ribosomal protein eS1 family. In terms of assembly, component of the small ribosomal subunit. Mature ribosomes consist of a small (40S) and a large (60S) subunit. The 40S subunit contains about 33 different proteins and 1 molecule of RNA (18S). The 60S subunit contains about 49 different proteins and 3 molecules of RNA (28S, 5.8S and 5S).

Its subcellular location is the cytoplasm. The protein is Small ribosomal subunit protein eS1 of Artemia franciscana (Brine shrimp).